The primary structure comprises 389 residues: Mannitol-1-phosphate 5-dehydrogenase (389 aa).

7-18 (AVHFGGGNIGRG) provides a ligand contact to NAD(+). Residue lysine 216 is part of the active site.

This sequence belongs to the mannitol dehydrogenase family. As to quaternary structure, monomer.

It catalyses the reaction D-mannitol 1-phosphate + NAD(+) = beta-D-fructose 6-phosphate + NADH + H(+). Catalyzes the NAD(H)-dependent interconversion of D-fructose 6-phosphate and D-mannitol 1-phosphate in the mannitol metabolic pathway. This chain is Mannitol-1-phosphate 5-dehydrogenase, found in Pyrenophora tritici-repentis (strain Pt-1C-BFP) (Wheat tan spot fungus).